Consider the following 386-residue polypeptide: Cytoplasmic 60S subunit biogenesis factor ZNF622 (386 aa).

Residue Ala-2 is modified to N-acetylalanine. 2 U1-type zinc fingers span residues Tyr-4–His-28 and Thr-67–His-91. Residues Ala-135–Pro-237 form a disordered region. Basic and acidic residues predominate over residues Gly-165 to Pro-176. Residues Glu-194–Glu-235 show a composition bias toward acidic residues. Ser-269 bears the Phosphoserine mark.

It belongs to the REI1 family. Homo- and heterodimer. Associates with pre-60S ribosomal particles. Interacts with MELK and MYBL2. Interacts with DNAJC21. Post-translationally, phosphorylated by MELK. The phosphorylation may redirect the protein to the nucleus. Ubiquitinated by HECTD1, leading to its degradation.

Its subcellular location is the cytoplasm. It localises to the nucleus. Its function is as follows. Pre-60S-associated cytoplasmic factor involved in the cytoplasmic maturation of the 60S subunit. This chain is Cytoplasmic 60S subunit biogenesis factor ZNF622 (Znf622), found in Rattus norvegicus (Rat).